A 650-amino-acid polypeptide reads, in one-letter code: Chaperone protein DnaK (650 aa).

Thr-200 carries the post-translational modification Phosphothreonine; by autocatalysis. The span at 611–636 (AQQAGAAGAAGAAEGAAHAGGAQQAA) shows a compositional bias: low complexity. Positions 611–637 (AQQAGAAGAAGAAEGAAHAGGAQQAAD) are disordered.

This sequence belongs to the heat shock protein 70 family.

Functionally, acts as a chaperone. The chain is Chaperone protein DnaK from Burkholderia ambifaria (strain MC40-6).